The primary structure comprises 435 residues: RuBisCO large subunit-binding protein subunit beta-1 (435 aa).

This sequence belongs to the chaperonin (HSP60) family. As to quaternary structure, oligomer of probably six alpha and six beta subunits.

It is found in the plastid. It localises to the chloroplast. Functionally, this protein binds RuBisCO small and large subunits and is implicated in the assembly of the enzyme oligomer. In Chlamydomonas reinhardtii (Chlamydomonas smithii), this protein is RuBisCO large subunit-binding protein subunit beta-1.